A 201-amino-acid chain; its full sequence is Large ribosomal subunit protein uL4 (201 aa).

The segment at 45 to 71 is disordered; that stretch reads AQKTRAEVTGSGKKPWRQKGTGRARAG.

Belongs to the universal ribosomal protein uL4 family. Part of the 50S ribosomal subunit.

In terms of biological role, one of the primary rRNA binding proteins, this protein initially binds near the 5'-end of the 23S rRNA. It is important during the early stages of 50S assembly. It makes multiple contacts with different domains of the 23S rRNA in the assembled 50S subunit and ribosome. Functionally, forms part of the polypeptide exit tunnel. In Shewanella sp. (strain MR-4), this protein is Large ribosomal subunit protein uL4.